The chain runs to 65 residues: Large ribosomal subunit protein bL33c (65 aa).

It belongs to the bacterial ribosomal protein bL33 family.

Its subcellular location is the plastid. The protein localises to the chloroplast. This is Large ribosomal subunit protein bL33c from Staurastrum punctulatum (Green alga).